The primary structure comprises 487 residues: F-box/LRR-repeat protein At1g48400 (487 aa).

The F-box domain occupies arginine 9–serine 57. 6 LRR repeats span residues serine 71–arginine 97, histidine 125–alanine 153, serine 174–aspartate 199, threonine 225–serine 251, threonine 327–serine 358, and asparagine 359–glycine 384.

The protein is F-box/LRR-repeat protein At1g48400 of Arabidopsis thaliana (Mouse-ear cress).